The sequence spans 399 residues: Formaldehyde dismutase (399 aa).

Cys-46 lines the Zn(2+) pocket. 47–51 (GSDQH) serves as a coordination point for NAD(+). Residues His-67, Cys-97, Cys-100, Cys-103, Cys-111, and Asp-170 each coordinate Zn(2+). Thr-174 serves as a coordination point for NAD(+). Residue His-177 participates in Zn(2+) binding. NAD(+) is bound by residues 197–198 (PV), 218–219 (DQ), Arg-223, Val-263, His-268, Pro-299, 299–301 (PGI), and 336–338 (GMA).

This sequence belongs to the zinc-containing alcohol dehydrogenase family. In terms of assembly, homotetramer. It depends on Zn(2+) as a cofactor. The cofactor is NAD(+). NADH is required as a cofactor.

The catalysed reaction is 2 formaldehyde + H2O = methanol + formate + H(+). Its activity is regulated as follows. Inhibited by the substrate analog pyrazole but not by NAD analogs such as AMP, ADP, ATP or N-methylnicotinamide chloride. Functionally, active against a range of primary alcohols as well as some secondary alcohols. Exhibits higher activity against alcohols with longer carbon chains. The polypeptide is Formaldehyde dismutase (Pseudomonas putida (Arthrobacter siderocapsulatus)).